Here is a 132-residue protein sequence, read N- to C-terminus: Fluoride-specific ion channel FluC 1 (132 aa).

A run of 4 helical transmembrane segments spans residues 11 to 31, 37 to 57, 70 to 92, and 105 to 125; these read AVFAGGALGALARAALSALAI, WPWPTFTVNVVGAFLVGYFTT, RPLLGTGLCGGLTTFSTMQVETI, and AYSVVSITLGLLAVHLATVLV. Na(+) is bound by residues G79 and T82.

The protein belongs to the fluoride channel Fluc/FEX (TC 1.A.43) family.

It is found in the cell membrane. The catalysed reaction is fluoride(in) = fluoride(out). Its activity is regulated as follows. Na(+) is not transported, but it plays an essential structural role and its presence is essential for fluoride channel function. Fluoride-specific ion channel. Important for reducing fluoride concentration in the cell, thus reducing its toxicity. In Mycobacterium bovis (strain ATCC BAA-935 / AF2122/97), this protein is Fluoride-specific ion channel FluC 1.